The sequence spans 88 residues: M-zodatoxin-Lt1a (88 aa).

The N-terminal stretch at 1–22 (MKYFVVALALAVALVCIAESTA) is a signal peptide. Positions 23–62 (YDVNEELENELDDLSDAAWLAKAAEDLQALDDFEESEESR) are excised as a propeptide. Positions 59 to 62 (EESR) match the Processing quadruplet motif motif.

In terms of processing, cleavage of the propeptide depends on the processing quadruplet motif (XXXR, with at least one of X being E). In terms of tissue distribution, expressed by the venom gland.

It is found in the secreted. In terms of biological role, has antimicrobial activity against Gram-positive bacteria (A.globiformis VKM Ac-1112 (MIC=0.5 uM), and B.subtilis VKM B-501 (MIC=1.0 uM)), Gram-negative bacteria (E.coli DH5-alpha (MIC=1.0 uM), E.coli MH1 (MIC=0.7 uM), and P.aeruginosa PAO1 (MIC=4.1 uM)), and yeasts (P.pastoris GS115 (MIC=17 uM), and S.cerevisiae Y190 (MIC&gt;33 uM)). Has a moderate hemolytic activity against rabbit erythrocytes. Causes paralysis, but is not lethal when injected into insect (M.domestica) larvae. This is M-zodatoxin-Lt1a from Lachesana tarabaevi (Spider).